The chain runs to 1052 residues: Suppressor of RPS4-RLD 1 (1052 aa).

Ala2 carries the N-acetylalanine modification. TPR repeat units lie at residues Ile39–Ala72 and Gln74–Gln106. A coiled-coil region spans residues Thr107 to Thr136. The interval Leu131–Ser181 is disordered. Residues His146–Glu161 are compositionally biased toward basic and acidic residues. Residues Ser162–Ser181 are compositionally biased toward low complexity. TPR repeat units follow at residues Val297–Tyr330, Pro331–Ala364, Ser365–Ser398, Asp400–Asn432, Lys433–Tyr466, Glu468–Val500, Lys502–Ile534, Glu535–Ala567, and Glu569–Val591. Residues Ser704–Ser739 are disordered. A helical transmembrane segment spans residues Gly966–Phe986.

In terms of assembly, multimer. Interacts with EDS1. Interacts with SNC1 and RPS4. Interacts (via TPR domain) with SGT1 (via TPR domain). Interacts with the TCP transcription factors TCP8, TCP14, TCP15, TCP20, TCP22 and TCP23. In terms of tissue distribution, ubiquitous. Not detected in very young flowers and older siliques.

It is found in the nucleus. The protein resides in the cytoplasm. Its subcellular location is the perinuclear region. It localises to the membrane. The protein localises to the microsome. In terms of biological role, negative regulator of effector-triggered immunity associated with the EDS1 resistance pathway. May localize its interactors to a microsomal membrane. May therefore negatively regulate RPS4 and SNC1 translocation to the nucleus. Contributes to the regulation of RPS2 and RPS4 protein levels and negatively regulates SNC1 stability. The sequence is that of Suppressor of RPS4-RLD 1 from Arabidopsis thaliana (Mouse-ear cress).